Consider the following 655-residue polypeptide: p-hydroxybenzoic acid efflux pump subunit AaeB (655 aa).

Helical transmembrane passes span 13–33 (FAVKLATAIVLALFVGFHFQL), 38–58 (WAVLTAAIVAAGPAFAAGGEP), 69–89 (LRIIGTFIGCIAGLVIIIAMI), 93–113 (LLMILVCCIWAGFCTWISSLV), 121–141 (WGLAGYTALIIVITIQPEPLL), 152–172 (EIVIGIVCAIMADLLFSPRSI), 370–390 (LFWLWTGWTSGSGAMVMIAVV), 407–427 (FIYGTLAALPLGLLYFLVIIP), 431–451 (QSMLLLCISLAVLGFFLGIEV), 459–479 (MGALASTINIIVLDNPMTFHF), and 482–502 (FLDSALGQIVGCVLAFTVILL).

Belongs to the aromatic acid exporter ArAE (TC 2.A.85) family.

It is found in the cell inner membrane. Functionally, forms an efflux pump with AaeA. Could function as a metabolic relief valve, allowing to eliminate certain compounds when they accumulate to high levels in the cell. This is p-hydroxybenzoic acid efflux pump subunit AaeB from Escherichia coli O81 (strain ED1a).